We begin with the raw amino-acid sequence, 20 residues long: Cytochrome c oxidase subunit 5B heart, mitochondrial (20 aa).

The disordered stretch occupies residues 1 to 20 (XXLKGIPTDEEQATGLEEYA).

The protein belongs to the cytochrome c oxidase subunit 5B family. Component of the cytochrome c oxidase (complex IV, CIV), a multisubunit enzyme composed of 14 subunits. The complex is composed of a catalytic core of 3 subunits MT-CO1, MT-CO2 and MT-CO3, encoded in the mitochondrial DNA, and 11 supernumerary subunits COX4I, COX5A, COX5B, COX6A, COX6B, COX6C, COX7A, COX7B, COX7C, COX8 and NDUFA4, which are encoded in the nuclear genome. The complex exists as a monomer or a dimer and forms supercomplexes (SCs) in the inner mitochondrial membrane with NADH-ubiquinone oxidoreductase (complex I, CI) and ubiquinol-cytochrome c oxidoreductase (cytochrome b-c1 complex, complex III, CIII), resulting in different assemblies (supercomplex SCI(1)III(2)IV(1) and megacomplex MCI(2)III(2)IV(2)).

Its subcellular location is the mitochondrion inner membrane. The protein operates within energy metabolism; oxidative phosphorylation. Its function is as follows. Component of the cytochrome c oxidase, the last enzyme in the mitochondrial electron transport chain which drives oxidative phosphorylation. The respiratory chain contains 3 multisubunit complexes succinate dehydrogenase (complex II, CII), ubiquinol-cytochrome c oxidoreductase (cytochrome b-c1 complex, complex III, CIII) and cytochrome c oxidase (complex IV, CIV), that cooperate to transfer electrons derived from NADH and succinate to molecular oxygen, creating an electrochemical gradient over the inner membrane that drives transmembrane transport and the ATP synthase. Cytochrome c oxidase is the component of the respiratory chain that catalyzes the reduction of oxygen to water. Electrons originating from reduced cytochrome c in the intermembrane space (IMS) are transferred via the dinuclear copper A center (CU(A)) of subunit 2 and heme A of subunit 1 to the active site in subunit 1, a binuclear center (BNC) formed by heme A3 and copper B (CU(B)). The BNC reduces molecular oxygen to 2 water molecules using 4 electrons from cytochrome c in the IMS and 4 protons from the mitochondrial matrix. The sequence is that of Cytochrome c oxidase subunit 5B heart, mitochondrial from Oncorhynchus mykiss (Rainbow trout).